We begin with the raw amino-acid sequence, 264 residues long: Hemin import ATP-binding protein HmuV (264 aa).

The 241-residue stretch at 2 to 242 (IEAVNICVQR…QNLSDAYHCS (241 aa)) folds into the ABC transporter domain. An ATP-binding site is contributed by 34–41 (GPNGSGKS).

It belongs to the ABC transporter superfamily. Heme (hemin) importer (TC 3.A.1.14.5) family. In terms of assembly, the complex is composed of two ATP-binding proteins (HmuV), two transmembrane proteins (HmuU) and a solute-binding protein (HmuT).

It localises to the cell inner membrane. Its function is as follows. Part of the ABC transporter complex HmuTUV involved in hemin import. Responsible for energy coupling to the transport system. This is Hemin import ATP-binding protein HmuV from Bartonella quintana (strain Toulouse) (Rochalimaea quintana).